The primary structure comprises 379 residues: UDP-N-acetylglucosamine--N-acetylmuramyl-(pentapeptide) pyrophosphoryl-undecaprenol N-acetylglucosamine transferase (379 aa).

UDP-N-acetyl-alpha-D-glucosamine-binding positions include 10–12 (TGG), Asn124, and Arg165. The interval 174–195 (TRDQGPGIRDQEKHMTDSTGPA) is disordered. UDP-N-acetyl-alpha-D-glucosamine-binding residues include Ser211, Ile266, and Gln311.

Belongs to the glycosyltransferase 28 family. MurG subfamily.

Its subcellular location is the cell inner membrane. It catalyses the reaction di-trans,octa-cis-undecaprenyl diphospho-N-acetyl-alpha-D-muramoyl-L-alanyl-D-glutamyl-meso-2,6-diaminopimeloyl-D-alanyl-D-alanine + UDP-N-acetyl-alpha-D-glucosamine = di-trans,octa-cis-undecaprenyl diphospho-[N-acetyl-alpha-D-glucosaminyl-(1-&gt;4)]-N-acetyl-alpha-D-muramoyl-L-alanyl-D-glutamyl-meso-2,6-diaminopimeloyl-D-alanyl-D-alanine + UDP + H(+). Its pathway is cell wall biogenesis; peptidoglycan biosynthesis. Its function is as follows. Cell wall formation. Catalyzes the transfer of a GlcNAc subunit on undecaprenyl-pyrophosphoryl-MurNAc-pentapeptide (lipid intermediate I) to form undecaprenyl-pyrophosphoryl-MurNAc-(pentapeptide)GlcNAc (lipid intermediate II). The sequence is that of UDP-N-acetylglucosamine--N-acetylmuramyl-(pentapeptide) pyrophosphoryl-undecaprenol N-acetylglucosamine transferase from Pelobacter propionicus (strain DSM 2379 / NBRC 103807 / OttBd1).